A 256-amino-acid polypeptide reads, in one-letter code: 5-oxoprolinase subunit A (256 aa).

It belongs to the LamB/PxpA family. As to quaternary structure, forms a complex composed of PxpA, PxpB and PxpC.

It carries out the reaction 5-oxo-L-proline + ATP + 2 H2O = L-glutamate + ADP + phosphate + H(+). In terms of biological role, catalyzes the cleavage of 5-oxoproline to form L-glutamate coupled to the hydrolysis of ATP to ADP and inorganic phosphate. This chain is 5-oxoprolinase subunit A, found in Alkaliphilus metalliredigens (strain QYMF).